The primary structure comprises 117 residues: UPF0102 protein Rsph17025_0472 (117 aa).

This sequence belongs to the UPF0102 family.

The polypeptide is UPF0102 protein Rsph17025_0472 (Cereibacter sphaeroides (strain ATCC 17025 / ATH 2.4.3) (Rhodobacter sphaeroides)).